An 828-amino-acid chain; its full sequence is Periplasmic nitrate reductase (828 aa).

The tat-type signal signal peptide spans 1–31; that stretch reads MKLSRRSFMKANAVAAAAAAAGLSVPGVARA. The 4Fe-4S Mo/W bis-MGD-type domain occupies 39–95; the sequence is IKWDKAPCRFCGTGCGVLVGTQQGRVVACQGDPDAPVNRGLNCIKGYFLPKIMYGKD. Residues Cys-46, Cys-49, Cys-53, and Cys-81 each coordinate [4Fe-4S] cluster. Residues Lys-83, Gln-150, Asn-175, Cys-179, 212 to 219, 243 to 247, 262 to 264, Met-372, Gln-376, Asn-482, 508 to 509, Lys-531, Asp-558, and 718 to 727 contribute to the Mo-bis(molybdopterin guanine dinucleotide) site; these read WGANMAEM, STYQH, QSD, SD, and TGRVLEHWHT. Phe-794 is a binding site for substrate. Positions 802 and 819 each coordinate Mo-bis(molybdopterin guanine dinucleotide).

The protein belongs to the prokaryotic molybdopterin-containing oxidoreductase family. NasA/NapA/NarB subfamily. In terms of assembly, component of the periplasmic nitrate reductase NapAB complex composed of NapA and NapB. The cofactor is [4Fe-4S] cluster. It depends on Mo-bis(molybdopterin guanine dinucleotide) as a cofactor. Post-translationally, predicted to be exported by the Tat system. The position of the signal peptide cleavage has not been experimentally proven.

It localises to the periplasm. The catalysed reaction is 2 Fe(II)-[cytochrome] + nitrate + 2 H(+) = 2 Fe(III)-[cytochrome] + nitrite + H2O. In terms of biological role, catalytic subunit of the periplasmic nitrate reductase complex NapAB. Receives electrons from NapB and catalyzes the reduction of nitrate to nitrite. In Escherichia coli O7:K1 (strain IAI39 / ExPEC), this protein is Periplasmic nitrate reductase.